Consider the following 347-residue polypeptide: MSEPLILGIESSCDETGVGIVRGNDLLANEVASSMEQHVRFGGVVPEVASRAHLEAIVPVLDKAASTAGVDLSELDGIAVTAGPGLAGALVVGLSAAKALASWLNKPLYGVNHLAGHVAVDLLEHGELPMPCGALLVSGGHTSLLWVNDIATDIIEVGSTIDDAAGEAYDKVARVLGLPYPGGPVIDKAAAEGDPTAIRFPRGLTARHDMVKHRFDYSFSGLKTAVSRWVETQQRDGVEFRIADVAASFQEAVADVLTAKAVDMCQEYGLTHFLIGGGVAANSRLRTLLAERMADAGVELRRPRPGLCTDNGAMIAALGVQVVKAGLPASAMDISADSGLPIETVLV.

Residues His-113 and His-117 each coordinate Fe cation. Substrate is bound by residues 136-140 (LVSGG), Asp-170, Gly-183, Asp-187, and Asn-282. Residue Asp-310 coordinates Fe cation.

The protein belongs to the KAE1 / TsaD family. It depends on Fe(2+) as a cofactor.

The protein localises to the cytoplasm. It catalyses the reaction L-threonylcarbamoyladenylate + adenosine(37) in tRNA = N(6)-L-threonylcarbamoyladenosine(37) in tRNA + AMP + H(+). Required for the formation of a threonylcarbamoyl group on adenosine at position 37 (t(6)A37) in tRNAs that read codons beginning with adenine. Is involved in the transfer of the threonylcarbamoyl moiety of threonylcarbamoyl-AMP (TC-AMP) to the N6 group of A37, together with TsaE and TsaB. TsaD likely plays a direct catalytic role in this reaction. This is tRNA N6-adenosine threonylcarbamoyltransferase from Cutibacterium acnes (strain DSM 16379 / KPA171202) (Propionibacterium acnes).